The following is a 217-amino-acid chain: Octanoyltransferase (217 aa).

In terms of domain architecture, BPL/LPL catalytic spans 35 to 214 (DEAGERIWLL…TLPAFLDKLR (180 aa)). Residues 73 to 80 (RGGRYTYH), 145 to 147 (AIG), and 158 to 160 (GFS) each bind substrate. C176 acts as the Acyl-thioester intermediate in catalysis.

Belongs to the LipB family.

It localises to the cytoplasm. The catalysed reaction is octanoyl-[ACP] + L-lysyl-[protein] = N(6)-octanoyl-L-lysyl-[protein] + holo-[ACP] + H(+). It functions in the pathway protein modification; protein lipoylation via endogenous pathway; protein N(6)-(lipoyl)lysine from octanoyl-[acyl-carrier-protein]: step 1/2. Its function is as follows. Catalyzes the transfer of endogenously produced octanoic acid from octanoyl-acyl-carrier-protein onto the lipoyl domains of lipoate-dependent enzymes. Lipoyl-ACP can also act as a substrate although octanoyl-ACP is likely to be the physiological substrate. The protein is Octanoyltransferase of Sphingopyxis alaskensis (strain DSM 13593 / LMG 18877 / RB2256) (Sphingomonas alaskensis).